The following is a 420-amino-acid chain: D-tagatose-1,6-bisphosphate aldolase subunit GatZ (420 aa).

Belongs to the GatZ/KbaZ family. GatZ subfamily. Forms a complex with GatY.

Its pathway is carbohydrate metabolism; D-tagatose 6-phosphate degradation; D-glyceraldehyde 3-phosphate and glycerone phosphate from D-tagatose 6-phosphate: step 2/2. In terms of biological role, component of the tagatose-1,6-bisphosphate aldolase GatYZ that is required for full activity and stability of the Y subunit. Could have a chaperone-like function for the proper and stable folding of GatY. When expressed alone, GatZ does not show any aldolase activity. Is involved in the catabolism of galactitol. In Escherichia coli (strain SMS-3-5 / SECEC), this protein is D-tagatose-1,6-bisphosphate aldolase subunit GatZ.